Consider the following 549-residue polypeptide: Lysine-specific demethylase JMJ31 (549 aa).

The JmjC domain occupies 125–296 (DYRPGQIYLA…SNMPEHMDSY (172 aa)). Positions 184, 186, and 266 each coordinate Fe cation.

This sequence belongs to the JARID1 histone demethylase family. Fe(2+) serves as cofactor. In terms of tissue distribution, mostly expressed in leaves and inflorescences, and, to a lower extent, in roots, siliques and stems.

The protein resides in the nucleus. Its function is as follows. May function as histone H3 lysine demethylase and be involved in regulation of gene expression. This Arabidopsis thaliana (Mouse-ear cress) protein is Lysine-specific demethylase JMJ31.